The following is a 197-amino-acid chain: Probable GTP-binding protein EngB (197 aa).

Residues 22–197 enclose the EngB-type G domain; sequence TGVEVAFAGR…LKEKLDIWYQ (176 aa). GTP is bound by residues 30-37, 57-61, 75-78, 142-145, and 177-179; these read GRSNAGKS, GRTQL, DLPG, TKAD, and FSS. Residues Ser37 and Thr59 each contribute to the Mg(2+) site.

The protein belongs to the TRAFAC class TrmE-Era-EngA-EngB-Septin-like GTPase superfamily. EngB GTPase family. The cofactor is Mg(2+).

In terms of biological role, necessary for normal cell division and for the maintenance of normal septation. The sequence is that of Probable GTP-binding protein EngB from Francisella philomiragia subsp. philomiragia (strain ATCC 25017 / CCUG 19701 / FSC 153 / O#319-036).